A 294-amino-acid polypeptide reads, in one-letter code: Elongation factor Ts (294 aa).

Positions 82-85 (TDFV) are involved in Mg(2+) ion dislocation from EF-Tu.

This sequence belongs to the EF-Ts family.

It is found in the cytoplasm. In terms of biological role, associates with the EF-Tu.GDP complex and induces the exchange of GDP to GTP. It remains bound to the aminoacyl-tRNA.EF-Tu.GTP complex up to the GTP hydrolysis stage on the ribosome. This chain is Elongation factor Ts, found in Psychrobacter cryohalolentis (strain ATCC BAA-1226 / DSM 17306 / VKM B-2378 / K5).